We begin with the raw amino-acid sequence, 372 residues long: Chaperone protein DnaJ (372 aa).

One can recognise a J domain in the interval 5-70; sequence DYYELLEISR…EKKSIYDRYG (66 aa). A CR-type zinc finger spans residues 134–211; that stretch reads GCNKEINYKY…CKGTGYEEVK (78 aa). The Zn(2+) site is built by C147, C150, C163, C166, C185, C188, C199, and C202. 4 CXXCXGXG motif repeats span residues 147–154, 163–170, 185–192, and 199–206; these read CKPCEGTG, CPTCKGQG, CPRCGGTG, and CKSCKGTG.

Belongs to the DnaJ family. As to quaternary structure, homodimer. The cofactor is Zn(2+).

Its subcellular location is the cytoplasm. Participates actively in the response to hyperosmotic and heat shock by preventing the aggregation of stress-denatured proteins and by disaggregating proteins, also in an autonomous, DnaK-independent fashion. Unfolded proteins bind initially to DnaJ; upon interaction with the DnaJ-bound protein, DnaK hydrolyzes its bound ATP, resulting in the formation of a stable complex. GrpE releases ADP from DnaK; ATP binding to DnaK triggers the release of the substrate protein, thus completing the reaction cycle. Several rounds of ATP-dependent interactions between DnaJ, DnaK and GrpE are required for fully efficient folding. Also involved, together with DnaK and GrpE, in the DNA replication of plasmids through activation of initiation proteins. The chain is Chaperone protein DnaJ from Aliarcobacter butzleri (strain RM4018) (Arcobacter butzleri).